We begin with the raw amino-acid sequence, 73 residues long: Disintegrin trigramin-beta-2 (73 aa).

The 73-residue stretch at 1-73 folds into the Disintegrin domain; sequence EAGKDCDCGS…AGCPRNPFHA (73 aa). Cystine bridges form between Cys-6–Cys-21, Cys-8–Cys-16, Cys-15–Cys-38, Cys-29–Cys-35, Cys-34–Cys-59, and Cys-47–Cys-66. Residues 51 to 53 carry the Cell attachment site motif; the sequence is RGD.

This sequence belongs to the venom metalloproteinase (M12B) family. P-II subfamily. P-IIa sub-subfamily. As to quaternary structure, monomer (disintegrin). In terms of tissue distribution, expressed by the venom gland.

It is found in the secreted. In terms of biological role, inhibits fibrinogen interaction with platelets. Acts by binding to the alpha-IIb/beta-3 receptor (ITGA2B/ITGB3) on the platelet surface and inhibits aggregation induced by ADP, thrombin, platelet-activating factor and collagen. In Craspedocephalus gramineus (Bamboo pit viper), this protein is Disintegrin trigramin-beta-2.